The sequence spans 856 residues: MISPDQQYETDTNLYNPSEIEKKWQSIWTENNLYKTDELTDNSDKFYALSMFPYPSGNLHMGHVRNYVITDLIARFQRFKGKSVLHPMGWDAFGLPAENAAIERGISPSVWTKKNISHMKSQLKLLGLSVDWDREFATCDENYYVWTQYLFLELYKAGLVYQKESEVNWDPIDNTVLANEQVDSEGKSWRSGAIVEKKLLKQWFLRITNYADELLKDLEKLDNWPERVKIMQDNWIGKSIGTNINFNINTHPEKKLTVFTTRPDTLFGVTYLAISVNHSLIKNISDQETIQHIENLKKYLKKNKNNELEKIGIKTSLIAINPVNSEPIPIWVASYVLDEYGTGAVMGVPAHDLRDFEFAKKNNIDIKQVIIKDKSEQNKELDEAYVENGYLINSNQYDGVANTIAKLKISEEGVNNRWAENKTQYRLRDWLISRQRYWGCPIPIVNCKKCGSVPLNQSELPVALPKDIDISANKINALGDNKNWVNTTCPKCGIAAKKETDTMDTFMCSSWYFLRYPSSKCPNKPFEKIEINKWLPVDQYVGGVEHAILHLLYARFFTKALRDNQLFEIDEPFKKLLTQGMVQAAAYKNNKTGKYVSPSDINDLSNPTDPIDNTKLEILFEKMSKSKYNGIDPESVIKKYGADTARMFILFKAPPEKDLEWGDTDVEGQFRFLSRIWKLYINCAKNVNIKSNSYPDKEKSLIKSMNIAIKEISNDILNNQFNTAISELMKFYNSLSNSINDVNNNLKIDALKTFCILLAPFAPHIAEEIWHLIGFKKSVHLEHWPSFNAEALKEDSYELVIQVNGKVREKVNINHDMNEDQIKELTLKRPNILKWTKDKEIRKIIIVKGKIMNIVV.

Residues P53–H63 carry the 'HIGH' region motif. Residues K622–S626 carry the 'KMSKS' region motif. Position 625 (K625) interacts with ATP.

This sequence belongs to the class-I aminoacyl-tRNA synthetase family.

Its subcellular location is the cytoplasm. It carries out the reaction tRNA(Leu) + L-leucine + ATP = L-leucyl-tRNA(Leu) + AMP + diphosphate. In Prochlorococcus marinus (strain MIT 9301), this protein is Leucine--tRNA ligase.